Consider the following 470-residue polypeptide: Cysteine--tRNA ligase (470 aa).

Cys28 contacts Zn(2+). Positions 30 to 40 (PTVYNYIHIGN) match the 'HIGH' region motif. Zn(2+) contacts are provided by Cys212, His237, and Glu241. The 'KMSKS' region signature appears at 271–275 (KMSKS). Residue Lys274 coordinates ATP.

Belongs to the class-I aminoacyl-tRNA synthetase family. In terms of assembly, monomer. Requires Zn(2+) as cofactor.

It localises to the cytoplasm. It carries out the reaction tRNA(Cys) + L-cysteine + ATP = L-cysteinyl-tRNA(Cys) + AMP + diphosphate. This Limosilactobacillus reuteri (strain DSM 20016) (Lactobacillus reuteri) protein is Cysteine--tRNA ligase.